A 903-amino-acid chain; its full sequence is Zinc finger CCCH domain-containing protein 27 (903 aa).

Residues 1–144 form a disordered region; that stretch reads MIKESSSPAL…GRNGAPWAQH (144 aa). A compositionally biased stretch (basic and acidic residues) spans 11 to 24; that stretch reads DADKIEVPSPKDEN. Acidic residues predominate over residues 33–46; that stretch reads TDNEDFEISDDDDD. The segment covering 86 to 96 has biased composition (basic and acidic residues); sequence SHGEAQKDFFP. A C3H1-type zinc finger spans residues 225–253; that stretch reads GMPRQRCRDFEERGFCLRGDMCPMEHGLN. The tract at residues 390 to 456 is disordered; the sequence is ASKKLGHGKT…GRQSNRASHK (67 aa). Over residues 397–410 the composition is skewed to low complexity; it reads GKTANATSTSATGN. Over residues 432-441 the composition is skewed to polar residues; the sequence is KDSNGQSNSR. One can recognise an RRM domain in the interval 459–531; that stretch reads RTLYVNGIPL…RFIKLWWANR (73 aa). Disordered regions lie at residues 545–609, 642–720, and 826–903; these read KSSH…DTKR, KQKG…QTSP, and TNHS…DVSQ. Residues 556–576 are compositionally biased toward polar residues; it reads SVPQPSSSNRGKENLQSATPR. Low complexity predominate over residues 577–587; the sequence is ASSGSSAEASG. Positions 608–649 form a coiled coil; it reads KRQESLELLEELRKKQEILAQKRDEFRRQLEKLAKQKGLANS. The span at 693–708 shows a compositional bias: low complexity; that stretch reads SGELASSSHKSSATSA. The segment covering 826–886 has biased composition (polar residues); that stretch reads TNHSRFQKTS…SMPTATSAKT (61 aa).

The sequence is that of Zinc finger CCCH domain-containing protein 27 from Oryza sativa subsp. japonica (Rice).